The chain runs to 160 residues: Cyclic pyranopterin monophosphate synthase (160 aa).

Substrate contacts are provided by residues 75-77 (LCH) and 113-114 (ME). Aspartate 128 is a catalytic residue.

It belongs to the MoaC family. As to quaternary structure, homohexamer; trimer of dimers.

The catalysed reaction is (8S)-3',8-cyclo-7,8-dihydroguanosine 5'-triphosphate = cyclic pyranopterin phosphate + diphosphate. Its pathway is cofactor biosynthesis; molybdopterin biosynthesis. Its function is as follows. Catalyzes the conversion of (8S)-3',8-cyclo-7,8-dihydroguanosine 5'-triphosphate to cyclic pyranopterin monophosphate (cPMP). This is Cyclic pyranopterin monophosphate synthase from Beijerinckia indica subsp. indica (strain ATCC 9039 / DSM 1715 / NCIMB 8712).